A 306-amino-acid chain; its full sequence is Pantothenate kinase (306 aa).

90-97 (GSVAVGKS) serves as a coordination point for ATP.

This sequence belongs to the prokaryotic pantothenate kinase family.

It localises to the cytoplasm. The catalysed reaction is (R)-pantothenate + ATP = (R)-4'-phosphopantothenate + ADP + H(+). Its pathway is cofactor biosynthesis; coenzyme A biosynthesis; CoA from (R)-pantothenate: step 1/5. This Listeria welshimeri serovar 6b (strain ATCC 35897 / DSM 20650 / CCUG 15529 / CIP 8149 / NCTC 11857 / SLCC 5334 / V8) protein is Pantothenate kinase.